The following is a 407-amino-acid chain: 1-deoxy-D-xylulose 5-phosphate reductoisomerase (407 aa).

6 residues coordinate NADPH: Thr25, Gly26, Ser27, Ile28, Asn53, and Asn136. Residue Lys137 participates in 1-deoxy-D-xylulose 5-phosphate binding. Glu138 is an NADPH binding site. Asp162 serves as a coordination point for Mn(2+). 4 residues coordinate 1-deoxy-D-xylulose 5-phosphate: Ser163, Glu164, Ser188, and His211. Residue Glu164 coordinates Mn(2+). Gly217 serves as a coordination point for NADPH. The 1-deoxy-D-xylulose 5-phosphate site is built by Ser224, Asn229, Lys230, and Glu233. Glu233 contacts Mn(2+).

The protein belongs to the DXR family. Mg(2+) serves as cofactor. Mn(2+) is required as a cofactor.

The enzyme catalyses 2-C-methyl-D-erythritol 4-phosphate + NADP(+) = 1-deoxy-D-xylulose 5-phosphate + NADPH + H(+). It functions in the pathway isoprenoid biosynthesis; isopentenyl diphosphate biosynthesis via DXP pathway; isopentenyl diphosphate from 1-deoxy-D-xylulose 5-phosphate: step 1/6. Functionally, catalyzes the NADPH-dependent rearrangement and reduction of 1-deoxy-D-xylulose-5-phosphate (DXP) to 2-C-methyl-D-erythritol 4-phosphate (MEP). In Nitrobacter winogradskyi (strain ATCC 25391 / DSM 10237 / CIP 104748 / NCIMB 11846 / Nb-255), this protein is 1-deoxy-D-xylulose 5-phosphate reductoisomerase.